A 168-amino-acid polypeptide reads, in one-letter code: UPF0304 protein MJECS11 (168 aa).

The protein belongs to the UPF0304 family.

This Methanocaldococcus jannaschii (strain ATCC 43067 / DSM 2661 / JAL-1 / JCM 10045 / NBRC 100440) (Methanococcus jannaschii) protein is UPF0304 protein MJECS11.